Here is a 176-residue protein sequence, read N- to C-terminus: ATP synthase subunit b, chloroplastic (176 aa).

The helical transmembrane segment at 19 to 39 (LDLLETNIINIFILIIILIYL) threads the bilayer.

This sequence belongs to the ATPase B chain family. F-type ATPases have 2 components, F(1) - the catalytic core - and F(0) - the membrane proton channel. F(1) has five subunits: alpha(3), beta(3), gamma(1), delta(1), epsilon(1). F(0) has four main subunits: a(1), b(1), b'(1) and c(10-14). The alpha and beta chains form an alternating ring which encloses part of the gamma chain. F(1) is attached to F(0) by a central stalk formed by the gamma and epsilon chains, while a peripheral stalk is formed by the delta, b and b' chains.

Its subcellular location is the plastid. It is found in the chloroplast thylakoid membrane. F(1)F(0) ATP synthase produces ATP from ADP in the presence of a proton or sodium gradient. F-type ATPases consist of two structural domains, F(1) containing the extramembraneous catalytic core and F(0) containing the membrane proton channel, linked together by a central stalk and a peripheral stalk. During catalysis, ATP synthesis in the catalytic domain of F(1) is coupled via a rotary mechanism of the central stalk subunits to proton translocation. In terms of biological role, component of the F(0) channel, it forms part of the peripheral stalk, linking F(1) to F(0). This Galdieria sulphuraria (Red alga) protein is ATP synthase subunit b, chloroplastic.